The chain runs to 552 residues: Chaperonin GroEL (552 aa).

ATP contacts are provided by residues 30 to 33 (TLGP), Lys51, 87 to 91 (DGTTT), Gly415, and Asp499.

The protein belongs to the chaperonin (HSP60) family. In terms of assembly, forms a cylinder of 14 subunits composed of two heptameric rings stacked back-to-back. Interacts with the co-chaperonin GroES.

The protein localises to the cytoplasm. It catalyses the reaction ATP + H2O + a folded polypeptide = ADP + phosphate + an unfolded polypeptide.. In terms of biological role, together with its co-chaperonin GroES, plays an essential role in assisting protein folding. The GroEL-GroES system forms a nano-cage that allows encapsulation of the non-native substrate proteins and provides a physical environment optimized to promote and accelerate protein folding. The chain is Chaperonin GroEL from Hamiltonella defensa subsp. Acyrthosiphon pisum (strain 5AT).